A 465-amino-acid chain; its full sequence is Neuraminidase (465 aa).

Over 1–11 the chain is Intravirion; sequence MLPSTIQTLTL. The helical transmembrane segment at 12–34 threads the bilayer; that stretch reads FLTSGGVLLSLYVSASLSYLLYS. The interval 13-35 is involved in apical transport and lipid raft association; sequence LTSGGVLLSLYVSASLSYLLYSD. Residues 35 to 465 lie on the Virion surface side of the membrane; sequence DILLKFSSKI…DTVTGVDMAL (431 aa). The interval 38–85 is hypervariable stalk region; the sequence is LKFSSKITAPTMTLDCANASNVQAVNRSATKEMTFLLPEPEWTYPRLS. Asn55 and Asn63 each carry an N-linked (GlcNAc...) asparagine; by host glycan. Intrachain disulfides connect Cys86–Cys419, Cys121–Cys126, Cys181–Cys228, Cys230–Cys235, Cys276–Cys290, Cys278–Cys288, Cys317–Cys336, and Cys423–Cys446. Positions 88–465 are head of neuraminidase; sequence GSTFQKALLI…DTVTGVDMAL (378 aa). Arg115 is a binding site for substrate. Asn143 carries an N-linked (GlcNAc...) asparagine; by host glycan. The active-site Proton donor/acceptor is the Asp148. Arg149 contacts substrate. 274–275 serves as a coordination point for substrate; it reads EE. Asn283 is a glycosylation site (N-linked (GlcNAc...) asparagine; by host). Position 291 (Arg291) interacts with substrate. 5 residues coordinate Ca(2+): Asp292, Thr296, Asp323, Gly343, and Gly345. Arg373 serves as a coordination point for substrate. Catalysis depends on Tyr408, which acts as the Nucleophile.

Belongs to the glycosyl hydrolase 34 family. In terms of assembly, homotetramer. The cofactor is Ca(2+). N-glycosylated.

It localises to the virion membrane. The protein localises to the host apical cell membrane. It carries out the reaction Hydrolysis of alpha-(2-&gt;3)-, alpha-(2-&gt;6)-, alpha-(2-&gt;8)- glycosidic linkages of terminal sialic acid residues in oligosaccharides, glycoproteins, glycolipids, colominic acid and synthetic substrates.. Its activity is regulated as follows. Inhibited by the neuraminidase inhibitors zanamivir (Relenza) and oseltamivir (Tamiflu). These drugs interfere with the release of progeny virus from infected cells and are effective against all influenza strains. Resistance to neuraminidase inhibitors is quite rare. Its function is as follows. Catalyzes the removal of terminal sialic acid residues from viral and cellular glycoconjugates. Cleaves off the terminal sialic acids on the glycosylated HA during virus budding to facilitate virus release. Additionally helps virus spread through the circulation by further removing sialic acids from the cell surface. These cleavages prevent self-aggregation and ensure the efficient spread of the progeny virus from cell to cell. Otherwise, infection would be limited to one round of replication. Described as a receptor-destroying enzyme because it cleaves a terminal sialic acid from the cellular receptors. May facilitate viral invasion of the upper airways by cleaving the sialic acid moieties on the mucin of the airway epithelial cells. Likely to plays a role in the budding process through its association with lipid rafts during intracellular transport. May additionally display a raft-association independent effect on budding. Plays a role in the determination of host range restriction on replication and virulence. Sialidase activity in late endosome/lysosome traffic seems to enhance virus replication. The protein is Neuraminidase of Influenza B virus (strain B/Beijing/1/1987).